The sequence spans 362 residues: H-2 class I histocompatibility antigen, D-K alpha chain (362 aa).

Positions 1–24 (MGAMVPRTLLLLLAAALAPAQTRA) are cleaved as a signal peptide. Residues 25 to 114 (GPHSLRYFET…LLRYYNQSEG (90 aa)) are alpha-1. At 25–306 (GPHSLRYFET…RWEPPPSTDS (282 aa)) the chain is on the extracellular side. Residue N110 is glycosylated (N-linked (GlcNAc...) asparagine). The tract at residues 115–206 (GSHTIQRLSG…ELGNATLLHT (92 aa)) is alpha-2. Cysteines 125 and 188 form a disulfide. N-linked (GlcNAc...) asparagine glycans are attached at residues N200 and N280. Positions 207–298 (DSPKAHVTHH…GLPEPLTLRW (92 aa)) are alpha-3. Positions 209–297 (PKAHVTHHPR…EGLPEPLTLR (89 aa)) constitute an Ig-like C1-type domain. A disulfide bond links C227 and C283. Positions 299–306 (EPPPSTDS) are connecting peptide. Residues 307–333 (YMVIVAVLGVLGAVAIIGAVVAFVMMM) traverse the membrane as a helical segment. Over 334 to 362 (RRNTGGKGGDYTLTPGSQSSEMSLPDCKA) the chain is Cytoplasmic. Positions 340–362 (KGGDYTLTPGSQSSEMSLPDCKA) are disordered. A phosphoserine mark is found at S353 and S356.

This sequence belongs to the MHC class I family. Heterodimer of an alpha chain and a beta chain (beta-2-microglobulin). Polyubiquitinated in case of infection by murid herpesvirus 4, by the viral E3 ligase K3 (mK3), leading to target the protein for rapid degradation by the endoplasmic reticulum-associated degradation (ERAD) system. Ubiquitination takes place on lysine, as well as serine and threonine residues present in the cytoplasmic tail. Hydroxylated serine and threonine residues in the cytoplasmic tail are subject to ubiquitination via ester bonds instead of the classical isopeptide linkage. In terms of processing, hydroxylation of residues in the cytoplasmic tail.

The protein localises to the membrane. Functionally, involved in the presentation of foreign antigens to the immune system. The chain is H-2 class I histocompatibility antigen, D-K alpha chain (H2-D1) from Mus musculus (Mouse).